Reading from the N-terminus, the 108-residue chain is TYRO protein tyrosine kinase-binding protein (108 aa).

An N-terminal signal peptide occupies residues 1–25; the sequence is MGRLGPSNGLLPLLLAVGGFSLVQA. Over 26–36 the chain is Extracellular; it reads QRECSCSAVSP. Residues 37 to 57 traverse the membrane as a helical segment; that stretch reads GILAGIVLGDLVLTLLIALAV. Position 46 (Asp-46) interacts with Ca(2+). Residues 58–108 are Cytoplasmic-facing; it reads YSLGRLVPRTRGAVDVTRKQHIAETESAYQELQGQRSDVYSDLNTQRQYYK. One can recognise an ITAM domain in the interval 75-103; sequence RKQHIAETESAYQELQGQRSDVYSDLNTQ. 2 positions are modified to phosphotyrosine: Tyr-86 and Tyr-97.

The protein belongs to the TYROBP family. Homodimer; disulfide-linked. Homotrimer; disulfide-linked. Homotetramer; disulfide-linked. Homotrimers and homotetramers form when low levels of partner receptors are available and is competitive with assembly with interacting receptors. They may represent alternative oligomerization states or may be intermediates in the receptor assembly process. Binding of a metal cation aids in homooligomerization through coordination of the metal ion by the subunits of the oligomer. Interacts with TREM1. Interacts with TREM2. Interacts with CLECSF5. Interacts with CD300LB and CD300C2. Interacts with CD300E. Interacts (via ITAM domain) with SYK (via SH2 domains); activates SYK mediating neutrophils and macrophages integrin-mediated activation. Interacts with KLRC2. Interacts with CD300H. Interacts with KLRD1. Interacts with SIGLEC1. Post-translationally, following ligand binding by associated receptors, tyrosine phosphorylated in the ITAM domain which leads to activation of additional tyrosine kinases and subsequent cell activation. In terms of tissue distribution, highly expressed in spleen, liver and thymus. Weakly expressed in lymph nodes. Expressed in peripheral blood leukocytes, granulocytes, macrophages, and monocytes. LPS does not increase expression in granulocytes.

The protein resides in the cell membrane. Adapter protein which non-covalently associates with activating receptors found on the surface of a variety of immune cells to mediate signaling and cell activation following ligand binding by the receptors. TYROBP is tyrosine-phosphorylated in the ITAM domain following ligand binding by the associated receptors which leads to activation of additional tyrosine kinases and subsequent cell activation. Also has an inhibitory role in some cells. Non-covalently associates with activating receptors of the CD300 family to mediate cell activation. Also mediates cell activation through association with activating receptors of the CD200R family. Required for neutrophil activation mediated by integrin. Required for the activation of myeloid cells mediated by the CLEC5A/MDL1 receptor. Associates with natural killer (NK) cell receptors such as the KLRD1/KLRC2 heterodimer to mediate NK cell activation. Associates with TREM1 to mediate activation of neutrophils and monocytes. Associates with TREM2 on monocyte-derived dendritic cells to mediate up-regulation of chemokine receptor CCR7 and dendritic cell maturation and survival. Association with TREM2 mediates cytokine-induced formation of multinucleated giant cells which are formed by the fusion of macrophages. Stabilizes the TREM2 C-terminal fragment (TREM2-CTF) produced by TREM2 ectodomain shedding which suppresses the release of pro-inflammatory cytokines. In microglia, required with TREM2 for phagocytosis of apoptotic neurons. Required with ITGAM/CD11B in microglia to control production of microglial superoxide ions which promote the neuronal apoptosis that occurs during brain development. Promotes pro-inflammatory responses in microglia following nerve injury which accelerates degeneration of injured neurons. Positively regulates the expression of the IRAK3/IRAK-M kinase and IL10 production by liver dendritic cells and inhibits their T cell allosimulatory ability. Negatively regulates B cell proliferation. Required for CSF1-mediated osteoclast cytoskeletal organization. Positively regulates multinucleation during osteoclast development. This Sus scrofa (Pig) protein is TYRO protein tyrosine kinase-binding protein.